The sequence spans 888 residues: Patched domain-containing protein 1 (888 aa).

The helical transmembrane segment at 20–40 (FIASHPVFFASAPVLISILLG) threads the bilayer. N-linked (GlcNAc...) asparagine glycans are attached at residues N77, N133, and N167. In terms of domain architecture, SSD spans 268–427 (SERYLVTSLI…LSFYGSSLVF (160 aa)). 2 helical membrane passes run 273-293 (VTSL…QDCV) and 298-318 (WLGL…AGII). N-linked (GlcNAc...) asparagine glycans are attached at residues N319 and N326. Helical transmembrane passes span 328–348 (TFLG…FEML), 373–393 (LSFS…ASPF), 407–427 (CIAI…SLVF), and 502–522 (PFVV…YLQV). Residues N568, N599, and N608 are each glycosylated (N-linked (GlcNAc...) asparagine). 2 helical membrane passes run 707–727 (ALFL…NVWI) and 738–758 (VIGF…LCLI). N762 carries N-linked (GlcNAc...) asparagine glycosylation. The chain crosses the membrane as a helical span at residues 795-815 (GVAILQSYLCYIVGLFPLAAV). Residue N818 is glycosylated (N-linked (GlcNAc...) asparagine). The helical transmembrane segment at 826–846 (CLFLIAFVTFFHCFAILPVIL) threads the bilayer.

The protein belongs to the patched family. As to expression, broadly expressed in the brain. Selectively expressed in the thalamic reticular nucleus (TRN) in early development and continues to be enriched in this structure throughout adult life.

The protein resides in the cell membrane. Its subcellular location is the cell projection. It localises to the dendritic spine. Functionally, required for the development and function of the thalamic reticular nucleus (TRN), a part of the thalamus that is critical for thalamocortical transmission, generation of sleep rhythms, sensorimotor processing and attention. Can bind cholesterol in vitro. The protein is Patched domain-containing protein 1 of Mus musculus (Mouse).